The chain runs to 580 residues: Acyl-coenzyme A synthetase ACSM3, mitochondrial (580 aa).

A mitochondrion-targeting transit peptide spans 1-21 (MVMLLRARCFQRLAIPDPMRV). K67 and K100 each carry N6-succinyllysine. The residue at position 151 (K151) is an N6-acetyllysine. ATP contacts are provided by residues 229–237 (TSGTTGPPK), 368–373 (EGYGQT), D455, R470, and K566.

This sequence belongs to the ATP-dependent AMP-binding enzyme family. Mg(2+) is required as a cofactor. Requires Mn(2+) as cofactor. Detected in kidney (at protein level). Detected in kidney proximal tubules and in liver. Detected at low levels in testis, stomach, heart and lung.

The protein localises to the mitochondrion. Its subcellular location is the mitochondrion matrix. It catalyses the reaction a medium-chain fatty acid + ATP + CoA = a medium-chain fatty acyl-CoA + AMP + diphosphate. It carries out the reaction propanoate + ATP + CoA = propanoyl-CoA + AMP + diphosphate. The catalysed reaction is butanoate + ATP + CoA = butanoyl-CoA + AMP + diphosphate. The enzyme catalyses 2-methylpropanoate + ATP + CoA = 2-methylpropanoyl-CoA + AMP + diphosphate. It catalyses the reaction 2-methylbutanoate + ATP + CoA = 2-methylbutanoyl-CoA + AMP + diphosphate. It carries out the reaction octanoate + ATP + CoA = octanoyl-CoA + AMP + diphosphate. Functionally, catalyzes the activation of fatty acids by CoA to produce an acyl-CoA, the first step in fatty acid metabolism. Capable of activating medium-chain fatty acids with a preference for isobutyrate among fatty acids with 2-6 carbon atoms. This Mus musculus (Mouse) protein is Acyl-coenzyme A synthetase ACSM3, mitochondrial (Acsm3).